Here is an 88-residue protein sequence, read N- to C-terminus: Alpha-latrotoxin-associated low molecular weight protein (88 aa).

A signal peptide spans 1–18 (MSKLFFVVFLCLIISVFA).

Belongs to the arthropod CHH/MIH/GIH/VIH hormone family. In terms of tissue distribution, expressed by the venom gland.

The protein resides in the secreted. Functionally, may increase the toxicity of alpha-latrotoxin and/or other venom components. Is non-toxic to mice and to the cockroach Periplaneta americana. The sequence is that of Alpha-latrotoxin-associated low molecular weight protein from Latrodectus tredecimguttatus (Mediterranean black widow spider).